We begin with the raw amino-acid sequence, 248 residues long: MPTPPVSALVAQMGEGPAPLYARVKQMIIQQIDNGSWPPHHRVPSESELVNELGFSRMTINRALRELTADGLLVRMQGVGTFVAEPKGRSALFEVNNIADEIAARGHQHSCQVITLTEEAAGSERALALDMREGQRVFHSLIVHFENGVPVQIEDRYVNAAIAPDYLKQDFTRQTPYAYLSQVAPLTEGEHVVEAILAEPEECRLLQIERGEPCLLIRRRTWSGRQPVTAARLIHPGSRHRLEGRFSK.

An HTH gntR-type domain is found at 18-86 (APLYARVKQM…QGVGTFVAEP (69 aa)). Positions 46-65 (ESELVNELGFSRMTINRALR) form a DNA-binding region, H-T-H motif.

It functions in the pathway amino-acid degradation; L-histidine degradation into L-glutamate [regulation]. Its function is as follows. Repressor which binds to the hutP region in the histidine utilization (hut) operon. It blocks the expression of all the hut genes in the absence of inducer. The chain is Histidine utilization repressor (hutC) from Pseudomonas putida (Arthrobacter siderocapsulatus).